A 249-amino-acid polypeptide reads, in one-letter code: Proteasome activator complex subunit 1 (249 aa).

The interval 55-102 (SNLKAPLDIPVPDPVKEKEKEERRKQQEKEDKDEKKKGEDEDKGPPCG) is disordered. The span at 68–98 (PVKEKEKEERRKQQEKEDKDEKKKGEDEDKG) shows a compositional bias: basic and acidic residues.

It belongs to the PA28 family. As to quaternary structure, heterodimer of PSME1 and PSME2, which forms a hexameric ring. PSME1 can form homoheptamers.

Functionally, implicated in immunoproteasome assembly and required for efficient antigen processing. The PA28 activator complex enhances the generation of class I binding peptides by altering the cleavage pattern of the proteasome. This is Proteasome activator complex subunit 1 (PSME1) from Bos taurus (Bovine).